We begin with the raw amino-acid sequence, 543 residues long: Chaperonin GroEL (543 aa).

Residues 29-32 (TIGP), 86-90 (DGTTT), Gly413, 478-480 (NAA), and Asp494 each bind ATP.

It belongs to the chaperonin (HSP60) family. As to quaternary structure, forms a cylinder of 14 subunits composed of two heptameric rings stacked back-to-back. Interacts with the co-chaperonin GroES.

The protein resides in the cytoplasm. The catalysed reaction is ATP + H2O + a folded polypeptide = ADP + phosphate + an unfolded polypeptide.. Together with its co-chaperonin GroES, plays an essential role in assisting protein folding. The GroEL-GroES system forms a nano-cage that allows encapsulation of the non-native substrate proteins and provides a physical environment optimized to promote and accelerate protein folding. In Limosilactobacillus fermentum (strain NBRC 3956 / LMG 18251) (Lactobacillus fermentum), this protein is Chaperonin GroEL.